Consider the following 270-residue polypeptide: MAVITKIEVQKRTKERFNIYIDKGQGEEYGFSVNQAVLIKHGLQKGLEIDEVEIANILYNEEVQKAYLQAISYLSYQMRTKQEVEEYLRKKEVGQAIISEVISKLLHDRYINDKEYAVLYVRTQSNVNQKGPSVIRKELLRKGVQEVIITHSLQEYPKEKQVDNAFMLIEKKKRSYQKHSFLQMKQKLEDMLIRKGFSRDVIQICLEELKEEKDDSKQQEALYYHGNKYYEKYKKYDGWTFENKMKQALYRKGFSIDEIEGFLQMKCEEG.

The protein belongs to the RecX family.

The protein resides in the cytoplasm. Its function is as follows. Modulates RecA activity. This is Regulatory protein RecX from Bacillus cytotoxicus (strain DSM 22905 / CIP 110041 / 391-98 / NVH 391-98).